The chain runs to 82 residues: Small ribosomal subunit protein bTHXm (82 aa).

A mitochondrion-targeting transit peptide spans Met-1–Val-22. Residues Arg-34–Arg-56 form a disordered region. The segment covering Lys-37 to Lys-46 has biased composition (basic residues).

Belongs to the bacterial ribosomal protein bTHX family.

Its subcellular location is the mitochondrion. The chain is Small ribosomal subunit protein bTHXm from Oryza sativa subsp. japonica (Rice).